The sequence spans 1196 residues: DNA excision repair protein ERCC-5 homolog (1196 aa).

The segment at 1–78 (MGVQGLWKLL…RIRPIFVFDG (78 aa)) is N-domain. Position 30 (D30) interacts with Mg(2+). Residues 31-67 (ISIWLNQAVKGARDRQGNAIQNAHLLTLFHRLCKLLF) form a DNA-binding; may bind to the undamaged single-strand DNA of the DNA repair bubble region. D77 serves as a coordination point for Mg(2+). Positions 79–818 (EAPLLKRQTL…LQLFGIPYIV (740 aa)) are spacer region. Disordered stretches follow at residues 152–176 (PLED…MNQK), 302–321 (KQEE…NSSQ), 629–661 (QTTQ…SSAM), and 722–758 (AVEE…DDVS). A compositionally biased stretch (acidic residues) spans 154 to 168 (EDNENNSSEEEEERE). The segment covering 311-321 (PPQSITFNSSQ) has biased composition (polar residues). Polar residues predominate over residues 722 to 731 (AVEEGNSGSQ). Basic and acidic residues predominate over residues 734–755 (PLEHDSGEPHEQSNSEESKDLD). The interval 819-914 (APMEAEAQCA…VSAMEILNEF (96 aa)) is I-domain. Mg(2+) contacts are provided by E822, E824, D843, and D845. The interval 853–869 (HVYKNFFSQNKHVEYYQ) is DNA-binding; may bind to the undamaged single-strand DNA of the DNA repair bubble. A DNA-binding; H2TH (helix-2turn-helix) motif which binds double-stranded DNA region spans residues 881–913 (RSKLINLAYLLGSDYTEGIPTVGYVSAMEILNE). D894 contacts Mg(2+). Positions 945 to 951 (TKVKKKL) are DNA-binding; may bind double-stranded DNA. The interval 1075 to 1196 (CTNQRKGQKT…KTMKETVKRK (122 aa)) is disordered. The Nuclear localization signal 1 signature appears at 1079 to 1095 (RKGQKTNTKSQGTKRRK). The span at 1119–1130 (SSKAYSSDGSSS) shows a compositional bias: low complexity. Residues 1142–1158 (KQSQSGIVGRQKASNKV) show a composition bias toward polar residues. Residues 1179-1196 (FQGKKTKSKTMKETVKRK) carry the Nuclear localization signal 2 motif.

The protein belongs to the XPG/RAD2 endonuclease family. XPG subfamily. Monomer. Homodimer. It depends on Mg(2+) as a cofactor.

Its subcellular location is the nucleus. It localises to the chromosome. Single-stranded structure-specific DNA endonuclease involved in DNA excision repair. Makes the 3'incision in DNA nucleotide excision repair (NER). Binds and bends DNA repair bubble substrate and breaks base stacking at the single-strand/double-strand DNA junction of the DNA bubble. Plays a role in base excision repair (BER) by promoting the binding of DNA glycosylase to its substrate and increasing DNA glycosylase catalytic activity that removes oxidized pyrimidines from DNA. Involved in transcription-coupled nucleotide excision repair (TCR) which allows RNA polymerase II-blocking lesions to be rapidly removed from the transcribed strand of active genes. Required for DNA replication fork maintenance and preservation of genomic stability. Involved in homologous recombination repair (HRR) induced by DNA replication stress. During HRR, binds to the replication fork with high specificity and stabilizes it. The polypeptide is DNA excision repair protein ERCC-5 homolog (ercc5) (Xenopus laevis (African clawed frog)).